Consider the following 546-residue polypeptide: 2-isopropylmalate synthase (546 aa).

Positions 8–271 constitute a Pyruvate carboxyltransferase domain; it reads ILIFDTTLRD…NSFFGRSSDS (264 aa). D17, H208, H210, and N244 together coordinate Mn(2+). The segment at 408–546 is regulatory domain; that stretch reads QLSHVQVSCG…KNKVLSNPKK (139 aa).

It belongs to the alpha-IPM synthase/homocitrate synthase family. LeuA type 1 subfamily. Homodimer. It depends on Mn(2+) as a cofactor.

The protein localises to the cytoplasm. It catalyses the reaction 3-methyl-2-oxobutanoate + acetyl-CoA + H2O = (2S)-2-isopropylmalate + CoA + H(+). Its pathway is amino-acid biosynthesis; L-leucine biosynthesis; L-leucine from 3-methyl-2-oxobutanoate: step 1/4. Functionally, catalyzes the condensation of the acetyl group of acetyl-CoA with 3-methyl-2-oxobutanoate (2-ketoisovalerate) to form 3-carboxy-3-hydroxy-4-methylpentanoate (2-isopropylmalate). This chain is 2-isopropylmalate synthase, found in Prochlorococcus marinus subsp. pastoris (strain CCMP1986 / NIES-2087 / MED4).